The following is a 59-amino-acid chain: U-reduvitoxin-Pr6a (59 aa).

Residues 1-19 (MKVFLLTILLCFLIAYCAG) form the signal peptide. Cystine bridges form between C31–C46, C38–C51, and C45–C58.

The protein belongs to the venom Ptu1-like knottin family. In terms of tissue distribution, expressed by the venom gland.

Its subcellular location is the secreted. Binds reversibly and blocks P/Q-type voltage-gated calcium channels (Cav). This Platymeris rhadamanthus (Red spot assassin bug) protein is U-reduvitoxin-Pr6a.